The following is a 925-amino-acid chain: Serine/threonine-protein kinase SIK2 (925 aa).

The region spanning 20 to 271 (YDIEGTLGKG…IAQIKEHKWM (252 aa)) is the Protein kinase domain. Threonine 25 carries the phosphothreonine modification. ATP contacts are provided by residues 26-34 (LGKGNFAVV) and lysine 49. Residue lysine 53 is modified to N6-acetyllysine; by EP300. Catalysis depends on aspartate 142, which acts as the Proton acceptor. Threonine 175 is modified (phosphothreonine). A UBA domain is found at 295–335 (EFNEQVLRLMHSLGIDQQKTIESLQNKSYNHFAAIYFLLVE). Residue serine 534 is modified to Phosphoserine. The tract at residues 564–586 (ALSSQKREVHNRSPVSFREGRRA) is disordered. Position 587 is a phosphoserine (serine 587). 3 disordered regions span residues 630–674 (PNLA…PRQS), 742–776 (SSYP…PLSP), and 800–895 (QPLP…SSYD). Low complexity-rich tracts occupy residues 648 to 659 (QEEVSQQQESVS) and 742 to 756 (SSYP…LPRQ). The segment covering 765–774 (APPFSLTQPL) has biased composition (polar residues). Over residues 808 to 820 (PRAAPLPTQLQQQ) the composition is skewed to low complexity. The segment covering 821 to 833 (QPPPPPPPPPPRQ) has biased composition (pro residues).

The protein belongs to the protein kinase superfamily. CAMK Ser/Thr protein kinase family. SNF1 subfamily. As to quaternary structure, interacts with and phosphorylates TORC2/CRTC2. Mg(2+) is required as a cofactor. Phosphorylated at Thr-175 by STK11/LKB1 in complex with STE20-related adapter-alpha (STRADA) pseudo kinase and CAB39. Phosphorylated at Thr-484 in response to insulin in adipocytes. Post-translationally, acetylation at Lys-53 inhibits kinase activity. Deacetylated by HDAC6.

Its subcellular location is the cytoplasm. The protein localises to the endoplasmic reticulum membrane. It catalyses the reaction L-seryl-[protein] + ATP = O-phospho-L-seryl-[protein] + ADP + H(+). The enzyme catalyses L-threonyl-[protein] + ATP = O-phospho-L-threonyl-[protein] + ADP + H(+). Its activity is regulated as follows. Activated by phosphorylation on Thr-175. Its function is as follows. Serine/threonine-protein kinase that plays a role in many biological processes such as fatty acid oxidation, autophagy, immune response or glucose metabolism. Phosphorylates 'Ser-794' of IRS1 in insulin-stimulated adipocytes, potentially modulating the efficiency of insulin signal transduction. Inhibits CREB activity by phosphorylating and repressing TORCs, the CREB-specific coactivators. Phosphorylates EP300 and thus inhibits its histone acetyltransferase activity. In turn, regulates the DNA-binding ability of several transcription factors such as PPARA or MLXIPL. Also plays a role in thymic T-cell development. This is Serine/threonine-protein kinase SIK2 (SIK2) from Pongo abelii (Sumatran orangutan).